A 282-amino-acid chain; its full sequence is Tetraspanin-6 (282 aa).

Residues Met1–Thr7 are Cytoplasmic-facing. A helical membrane pass occupies residues Val8–Leu28. At Tyr29–Pro44 the chain is on the extracellular side. A helical transmembrane segment spans residues Leu45–Phe65. Topologically, residues Asn66–Tyr74 are cytoplasmic. The helical transmembrane segment at Leu75–Val95 threads the bilayer. Residues Thr96 to Ser220 lie on the Extracellular side of the membrane. The chain crosses the membrane as a helical span at residues Val221 to Phe241. Residues His242–Tyr282 are Cytoplasmic-facing.

The protein belongs to the tetraspanin (TM4SF) family.

Its subcellular location is the membrane. In terms of biological role, may be involved in the regulation of cell differentiation. The polypeptide is Tetraspanin-6 (TET6) (Arabidopsis thaliana (Mouse-ear cress)).